A 627-amino-acid chain; its full sequence is MSVISIVPLASKSCLYKSLMSSTHELKALCRPIVTLGMCRRGKSVMASMSTGLTTAVSDDGVQRRIGDHHSNLWDDNFIQSLSSPYRASSYGETTNKLIGEVKEIFNSLSMADGGLMSPVDDLLQHLSMVDNVERLGIDRHFQTEIKVSLDYVYSYWSEKGIGSGRDIVCTDLNTTALGFRILRLHGYTVFPDVFEHLKDQMGRIACSANHTERQISSILNLFRASLIAFPGEKVMEEAEIFSATYLKEALQTIPVSSLSQEIQYVLQYRWHSNLPRLEARTYIDILQENTKNQMLDVNTEKVLELAKLEFNIFHSLQQNELKSVSRWWKDSGFPDLNFIRHRHVEFYTLVSGIDMEPKHSTFRLSFVKMCHLITVLDDMYDTFGTIDELRLFTAAVKRWDPSTTQCLPEYMKGVYIVLYETVNEMAKEAQKSQGRDTLNYVRQALEAYIGAYHKEAEWISTGYLPTFDEYFENGKASSGHRIATLQPTFMLDIPFPHHILQEIDFPSKFNDFACSILRLRGDTRCYQADMARGEEASCISCYMKDNPGSTQEDALNHINNMIEETIKKLNRELLKPDNNVPISSKKHAFDISRGLHHFYNYRDGYTVASNETKNLVIKTVLEPVPM.

The transit peptide at 1-36 directs the protein to the chloroplast; that stretch reads MSVISIVPLASKSCLYKSLMSSTHELKALCRPIVTL. Aspartate 378, aspartate 382, and aspartate 530 together coordinate Mg(2+). The short motif at 378 to 382 is the DDXXD motif element; the sequence is DDMYD.

It belongs to the terpene synthase family. Tpsd subfamily. The cofactor is Mg(2+). Requires Mn(2+) as cofactor.

It localises to the plastid. The protein localises to the chloroplast. The enzyme catalyses (2E)-geranyl diphosphate = (+)-car-3-ene + diphosphate. It functions in the pathway terpene metabolism; oleoresin biosynthesis. Its function is as follows. Terpene synthase (TPS) involved in defensive oleoresin formation in conifers in response to insect attack (e.g. white pine weevil P.strobi) or other injury. This is Carene synthase 2, chloroplastic (TPS-3car2) from Picea sitchensis (Sitka spruce).